The chain runs to 76 residues: Antimicrobial peptide Smp24 (76 aa).

A signal peptide spans 1-22 (MQYKTFLVIFMAYLLVTHEAEA). Positions 47–76 (SKRKRDVEDFFDPYQRDLDLELERLLSQLQ) are excised as a propeptide.

It belongs to the non-disulfide-bridged peptide (NDBP) superfamily. Medium-length antimicrobial peptide (group 3) family. In terms of tissue distribution, expressed by the venom gland.

Its subcellular location is the secreted. The protein localises to the target cell membrane. Its function is as follows. Peptide that shows antimicrobial activity, moderate cytolysis on eukaryote cells and interference with DNA synthesis. Has potent activity against Gram-positive bacteria and moderate activity against Gram-negative bacteria, as well as moderate activity against fungi. Acts by inducing bacterial membrane disruption. Uses multiple modes of action depending on the membrane lipid composition. Uses a toroidal pore mechanism against the prokaryotic like membrane and forms hexagonal phase non-lamellar structures in eukaryotic-like membrane. Shows activity against B.subtilis (MIC=4 ug/ml), S.epidermidis (MIC=8 ug/ml), S.aureus (MIC=8 ug/ml), E.coli (MIC=64 ug/ml), K.pneumoniae (MIC=128 ug/ml), P.aeruginosa (MIC=256 ug/ml), and C.albicans (MIC=32 ug/ml). Shows moderate hemolysis activity. This is Antimicrobial peptide Smp24 from Scorpio palmatus (Israeli golden scorpion).